The following is a 250-amino-acid chain: Ubiquinone/menaquinone biosynthesis C-methyltransferase UbiE (250 aa).

Residues T73, D94, 122 to 123 (NA), and S139 contribute to the S-adenosyl-L-methionine site.

It belongs to the class I-like SAM-binding methyltransferase superfamily. MenG/UbiE family.

It catalyses the reaction a 2-demethylmenaquinol + S-adenosyl-L-methionine = a menaquinol + S-adenosyl-L-homocysteine + H(+). It carries out the reaction a 2-methoxy-6-(all-trans-polyprenyl)benzene-1,4-diol + S-adenosyl-L-methionine = a 5-methoxy-2-methyl-3-(all-trans-polyprenyl)benzene-1,4-diol + S-adenosyl-L-homocysteine + H(+). It functions in the pathway quinol/quinone metabolism; menaquinone biosynthesis; menaquinol from 1,4-dihydroxy-2-naphthoate: step 2/2. It participates in cofactor biosynthesis; ubiquinone biosynthesis. Its function is as follows. Methyltransferase required for the conversion of demethylmenaquinol (DMKH2) to menaquinol (MKH2) and the conversion of 2-polyprenyl-6-methoxy-1,4-benzoquinol (DDMQH2) to 2-polyprenyl-3-methyl-6-methoxy-1,4-benzoquinol (DMQH2). This is Ubiquinone/menaquinone biosynthesis C-methyltransferase UbiE from Francisella tularensis subsp. tularensis (strain WY96-3418).